A 248-amino-acid chain; its full sequence is Triosephosphate isomerase (248 aa).

2 residues coordinate substrate: asparagine 12 and lysine 14. Lysine 14 is modified (N6-acetyllysine). Position 68 is a 3'-nitrotyrosine (tyrosine 68). Histidine 96 acts as the Electrophile in catalysis. Position 106 is a phosphoserine (serine 106). Residue lysine 142 forms a Glycyl lysine isopeptide (Lys-Gly) (interchain with G-Cter in SUMO1) linkage. Lysine 149 carries the N6-succinyllysine modification. Lysine 156 is modified (N6-acetyllysine; alternate). Position 156 is an N6-succinyllysine; alternate (lysine 156). Glutamate 166 serves as the catalytic Proton acceptor. Threonine 173 bears the Phosphothreonine mark. Lysine 194 carries the post-translational modification N6-acetyllysine; alternate. Residue lysine 194 is modified to N6-succinyllysine; alternate. Position 194 is an N6-methyllysine; alternate (lysine 194). Tyrosine 209 bears the 3'-nitrotyrosine mark. Position 212 is a phosphoserine (serine 212). Threonine 214 is subject to Phosphothreonine. Serine 223 carries the phosphoserine modification. Residue lysine 238 is modified to N6-acetyllysine.

This sequence belongs to the triosephosphate isomerase family. As to quaternary structure, homodimer.

The protein localises to the cytoplasm. The enzyme catalyses dihydroxyacetone phosphate = methylglyoxal + phosphate. It carries out the reaction D-glyceraldehyde 3-phosphate = dihydroxyacetone phosphate. It participates in carbohydrate degradation; glycolysis; D-glyceraldehyde 3-phosphate from glycerone phosphate: step 1/1. The protein operates within carbohydrate biosynthesis; gluconeogenesis. Functionally, triosephosphate isomerase is an extremely efficient metabolic enzyme that catalyzes the interconversion between dihydroxyacetone phosphate (DHAP) and D-glyceraldehyde-3-phosphate (G3P) in glycolysis and gluconeogenesis. Its function is as follows. It is also responsible for the non-negligible production of methylglyoxal a reactive cytotoxic side-product that modifies and can alter proteins, DNA and lipids. The protein is Triosephosphate isomerase (TPI1) of Sus scrofa (Pig).